Consider the following 3011-residue polypeptide: Genome polyprotein (3011 aa).

S2 carries the N-acetylserine; by host modification. The interaction with STAT1 stretch occupies residues 2 to 23 (STNPKPQRKTKRNTNRRPQDVK). Residues 2–58 (STNPKPQRKTKRNTNRRPQDVKFPGGGQIVGGVYLLPRRGPRVGVRATRKTSERSQP) form an interaction with EIF2AK2/PKR region. The tract at residues 2 to 59 (STNPKPQRKTKRNTNRRPQDVKFPGGGQIVGGVYLLPRRGPRVGVRATRKTSERSQPR) is interaction with DDX3X. The tract at residues 2–75 (STNPKPQRKT…PKARRPEGRS (74 aa)) is disordered. Over 2–168 (STNPKPQRKT…EDGVNYATGN (167 aa)) the chain is Cytoplasmic. 2 consecutive short sequence motifs (nuclear localization signal) follow at residues 5–13 (PKPQRKTKR) and 38–43 (PRRGPR). Residues 7 to 16 (PQRKTKRNTN) show a composition bias toward basic residues. S53 carries the phosphoserine; by host modification. 2 consecutive short sequence motifs (nuclear localization signal) follow at residues 58–64 (PRGRRQP) and 66–71 (PKARRP). Over residues 58-68 (PRGRRQPIPKA) the composition is skewed to basic residues. Residue S99 is modified to Phosphoserine; by host. The important for endoplasmic reticulum and mitochondrial localization stretch occupies residues 112 to 152 (PRRRSRNLGKVIDTLTCGFADLMGYIPLVGAPLGGAARALA). Phosphoserine; by host PKA is present on S116. Residues 122–173 (VIDTLTCGFADLMGYIPLVGAPLGGAARALAHGVRVLEDGVNYATGNLPGCS) are interaction with APOA2. Positions 164 to 167 (YATG) are important for lipid droplets localization. A helical membrane pass occupies residues 169–189 (LPGCSFSIFLLALLSCLTVPA). Positions 178–191 (LLALLSCLTVPASA) are cleaved as a propeptide — ER anchor for the core protein, removed in mature form by host signal peptidase. The Lumenal segment spans residues 190 to 358 (SAVGVRNSSG…AGAHWGVLAG (169 aa)). Residues N196, N209, and N234 are each glycosylated (N-linked (GlcNAc...) asparagine; by host). Positions 265–296 (IVGAAAFCSAMYVGDLCGSIFLVGQIFTFSPR) are important for fusion. N-linked (GlcNAc...) asparagine; by host glycosylation is present at N305. Residues 359 to 379 (LAYYSMVGNWAKVVVVLLLFA) traverse the membrane as a helical segment. At 380-725 (GVDAETRVTG…WEYVVLLFLL (346 aa)) the chain is on the lumenal side. Residues 385–411 (TRVTGGAAGHTAFGFASFLAPGAKQKI) are HVR1. 4 N-linked (GlcNAc...) (high mannose) asparagine; by host glycosylation sites follow: N417, N423, N430, and N448. Disulfide bonds link C429/C552, C452/C459, C486/C494, and C503/C508. The tract at residues 474 to 479 (HEGNAS) is HVR2. Positions 480–493 (DDQRPYCWHYALRP) are CD81-binding 1. N-linked (GlcNAc...) (high mannose) asparagine; by host glycosylation is present at N532. An N-linked (GlcNAc...) asparagine; by host glycan is attached at N540. Residues 544 to 551 (PPMGNWFG) are CD81-binding 2. An N-linked (GlcNAc...) (high mannose) asparagine; by host glycan is attached at N556. An intrachain disulfide couples C564 to C569. N-linked (GlcNAc...) (high mannose) asparagine; by host glycosylation occurs at N576. 3 disulfides stabilise this stretch: C581–C585, C597–C620, and C607–C644. N-linked (GlcNAc...) (high mannose) asparagine; by host glycans are attached at residues N623 and N645. C652 and C677 are joined by a disulfide. The PKR/eIF2-alpha phosphorylation homology domain (PePHD) stretch occupies residues 660–671 (AELSPLLLSTTQ). The helical transmembrane segment at 726–746 (LADARICACLWMMLLISQVEA) threads the bilayer. Over 747–757 (ALENLIVLNAA) the chain is Lumenal. Residues 758-778 (SLVGTHGIVPFFIFFCAAWYL) form a helical membrane-spanning segment. Topologically, residues 779-781 (KGK) are cytoplasmic. Residues 782–803 (WAPGLAYSVYGMWPLLLLLLAL) form a helical membrane-spanning segment. The Lumenal segment spans residues 804–813 (PQRAYALDQE). A helical membrane pass occupies residues 814–834 (LAASCGATVFICLAVLTLSPY). Topologically, residues 835-838 (YKQY) are cytoplasmic. Residues 839 to 859 (MARGIWWLQYMLTRAEALLQV) form a helical membrane-spanning segment. At 860 to 881 (WVPPLNARGGRDGVVLLTCVLH) the chain is on the lumenal side. Residues 882–902 (PHLLFEITKIMLAILGPLWIL) form a helical membrane-spanning segment. The 124-residue stretch at 903-1026 (QASLLKVPYF…ALTDKGWRLL (124 aa)) folds into the Peptidase C18 domain. Residues 903-1657 (QASLLKVPYF…CMSADLEVVT (755 aa)) are Cytoplasmic-facing. The segment at 904-1206 (ASLLKVPYFV…PVESLETTMR (303 aa)) is protease NS2-3. C922 carries S-palmitoyl cysteine; by host lipidation. The interval 929-949 (AGGQYVQMALLKLGAFAGTYI) is interaction with host SCPS1. Catalysis depends on for protease NS2 activity; shared with dimeric partner residues H952, E972, and C993. Residues 1027–1208 (APITAYAQQT…ESLETTMRSP (182 aa)) form the Peptidase S29 domain. Active-site charge relay system; for serine protease NS3 activity residues include H1083 and D1107. Positions 1123 and 1125 each coordinate Zn(2+). S1165 (charge relay system; for serine protease NS3 activity) is an active-site residue. 2 residues coordinate Zn(2+): C1171 and H1175. The Helicase ATP-binding domain occupies 1217-1369 (PTVPQSYQVA…SNIEEVALST (153 aa)). An ATP-binding site is contributed by 1230 to 1237 (APTGSGKS). Residues S1237 and E1317 each coordinate Mg(2+). Residues 1316–1319 (DECH) carry the DECH box motif. Residues 1486-1497 (QRRGRTGRGKHG) are RNA-binding. A helical membrane pass occupies residues 1658–1678 (STWVLVGGVLAALAAYCLSTG). Positions 1679–1690 (SVVIVGRIILSG) are NS3-binding. At 1679–1805 (SVVIVGRIIL…AVTSPLTTQQ (127 aa)) the chain is on the cytoplasmic side. Residues 1806 to 1824 (TLLFNILGGWVAAQLAAPA) form a helical membrane-spanning segment. Residues 1825-1828 (AATA) are Lumenal-facing. A helical membrane pass occupies residues 1829 to 1849 (FVGAGITGAVIGSVGLGKVLV). D1850 is a topological domain (cytoplasmic). The chain crosses the membrane as a helical span at residues 1851 to 1871 (ILAGYGAGVAGALVAFKIMSG). At 1872–1881 (EAPTAEDLVN) the chain is on the lumenal side. A helical membrane pass occupies residues 1882-1902 (LLPAILSPGALVVGVVCAAIL). The Cytoplasmic portion of the chain corresponds to 1903–1972 (RRHVGPGEGA…WISSDCTAPC (70 aa)). S-palmitoyl cysteine; by host attachment occurs at residues C1968 and C1972. The stretch at 1973–2002 (AGSWLKDVWDWICEVLSDFKSWLKAKLMPQ) is an intramembrane region. Residues 2003 to 2990 (LPGIPFVSCQ…YHSVSHVRPR (988 aa)) lie on the Cytoplasmic side of the membrane. Residues C2011, C2029, C2031, and C2052 each coordinate Zn(2+). The segment at 2120-2208 (EFFTEVDGVR…ASSSASQLSA (89 aa)) is FKBP8-binding. The segment at 2120–2332 (EFFTEVDGVR…PVPPPRRKRT (213 aa)) is transcriptional activation. The tract at residues 2135-2139 (PPCKP) is interaction with non-structural protein 4A. Residues 2189–2441 (RLNRGSPPSL…TPCAAEETKL (253 aa)) form an interaction with host SKP2 region. S2194 bears the Phosphoserine; by host; in p56 mark. A phosphoserine; by host; in p58 mark is found at S2197, S2201, S2204, S2207, and S2210. Residues 2210-2249 (SLKATCTTHHDSPDADLITANLLWRQEMGGNITRVESENK) form an ISDR region. The interaction with EIF2AK2/PKR stretch occupies residues 2210 to 2275 (SLKATCTTHH…REISVPAEIL (66 aa)). Positions 2249 to 2306 (KIVILDSFDPLVAEEDDREISVPAEILLKSKKFPPAMPIWARPDYNPPLVEPWKRPDY) are NS4B-binding. The SH3-binding signature appears at 2322–2325 (TPVP). Residues 2326 to 2334 (PPRRKRTVV) carry the Nuclear localization signal motif. K2350 is covalently cross-linked (Glycyl lysine isopeptide (Lys-Gly) (interchain with G-Cter in ubiquitin)). Residues 2352–2373 (FGSSTTSGVTSGEAAESSPAPS) are compositionally biased toward low complexity. The disordered stretch occupies residues 2352-2409 (FGSSTTSGVTSGEAAESSPAPSCDGELDSEAESYSSMPPLEGEPGDPDLSDGSWSTVS). The segment at 2354–2377 (SSTTSGVTSGEAAESSPAPSCDGE) is V3. Phosphoserine; by host is present on residues S2449 and S2462. One can recognise a RdRp catalytic domain in the interval 2634 to 2752 (PMGFSYDTRC…ICESAGVQED (119 aa)). The Mg(2+) site is built by D2640, D2738, and D2739. A helical membrane pass occupies residues 2991–3011 (WFFWCLLLLSVGVGIYLLPNR).

Belongs to the hepacivirus polyprotein family. Homooligomer. Interacts with E1 (via C-terminus). Interacts with the non-structural protein 5A. Interacts (via N-terminus) with host STAT1 (via SH2 domain); this interaction results in decreased STAT1 phosphorylation and ubiquitin-mediated proteasome-dependent STAT1 degradation, leading to decreased IFN-stimulated gene transcription. Interacts with host STAT3; this interaction constitutively activates STAT3. Interacts with host LTBR receptor. Interacts with host TNFRSF1A receptor and possibly induces apoptosis. Interacts with host HNRPK. Interacts with host YWHAE. Interacts with host UBE3A/E6AP. Interacts with host DDX3X. Interacts with host APOA2. Interacts with host RXRA protein. Interacts with host SP110 isoform 3/Sp110b; this interaction sequesters the transcriptional corepressor SP110 away from the nucleus. Interacts with host CREB3 nuclear transcription protein; this interaction triggers cell transformation. Interacts with host ACY3. Interacts with host C1QR1. Interacts with host RBM24; this interaction, which enhances the interaction of the mature core protein with 5'-UTR, may inhibit viral translation and favor replication. Interacts with host EIF2AK2/PKR; this interaction induces the autophosphorylation of EIF2AK2. Part of the viral assembly initiation complex composed of NS2, E1, E2, NS3, NS4A, NS5A and the mature core protein. As to quaternary structure, forms a heterodimer with envelope glycoprotein E2. Interacts with mature core protein. Interacts with protease NS2. The heterodimer E1/E2 interacts with host CLDN1; this interaction plays a role in viral entry into host cell. Interacts with host SPSB2 (via C-terminus). Part of the viral assembly initiation complex composed of NS2, E1, E2, NS3, NS4A, NS5A and the mature core protein. Interacts with host NEURL3; this interaction prevents E1 binding to glycoprotein E2. In terms of assembly, forms a heterodimer with envelope glycoprotein E1. Interacts with host CD81 and SCARB1 receptors; these interactions play a role in viral entry into host cell. Interacts with host EIF2AK2/PKR; this interaction inhibits EIF2AK2 and probably allows the virus to evade the innate immune response. Interacts with host CD209/DC-SIGN and CLEC4M/DC-SIGNR. Interact with host SPCS1; this interaction is essential for viral particle assembly. Interacts with protease NS2. The heterodimer E1/E2 interacts with host CLDN1; this interaction plays a role in viral entry into host cell. Part of the viral assembly initiation complex composed of NS2, E1, E2, NS3, NS4A, NS5A and the mature core protein. Interacts with host SLC3A2/4F2hc; the interaction may facilitate viral entry into host cell. Interacts with human PLSCR1. Homohexamer. Homoheptamer. Interacts with protease NS2. As to quaternary structure, homodimer. Interacts with host SPCS1; this interaction is essential for viral particle assembly. Interacts with envelope glycoprotein E1. Interacts with envelope glycoprotein E2. Interacts with viroporin p7. Interacts with serine protease/helicase NS3. Part of the replication complex composed of NS2, NS3, NS4A, NS4B, NS5A and the RNA-directed RNA polymerase embedded in an ER-derived membranous web. Part of the viral assembly initiation complex composed of NS2, E1, E2, NS3, NS4A, NS5A and the mature core protein. In terms of assembly, interacts with protease NS2. Interacts with non-structural protein 4A; this interaction stabilizes the folding of NS3 serine protease. NS3-NS4A interaction is essential for NS3 activation and allows membrane anchorage of the latter. NS3/NS4A complex also prevents phosphorylation of host IRF3, thus preventing the establishment of dsRNA induced antiviral state. Interacts with host MAVS; this interaction leads to the cleavage and inhibition of host MAVS. Interacts with host TICAM1; this interaction leads to the cleavage and inhibition of host TICAM1. Interacts with host TANK-binding kinase/TBK1; this interaction results in the inhibition of the association between TBK1 and IRF3, which leads to the inhibition of IRF3 activation. Interacts with host RBM24. Part of the replication complex composed of NS2, NS3, NS4A, NS4B, NS5A and the RNA-directed RNA polymerase embedded in an ER-derived membranous web. Part of the viral assembly initiation complex composed of NS2, E1, E2, NS3, NS4A, NS5A and the mature core protein. Interacts with NS3 serine protease; this interaction stabilizes the folding of NS3 serine protease. NS3-NS4A interaction is essential for NS3 activation and allows membrane anchorage of the latter. Interacts with non-structural protein 5A (via N-terminus). Part of the replication complex composed of NS2, NS3, NS4A, NS4B, NS5A and the RNA-directed RNA polymerase embedded in an ER-derived membranous web. Part of the viral assembly initiation complex composed of NS2, E1, E2, NS3, NS4A, NS5A and the mature core protein. As to quaternary structure, homomultimer. Interacts with non-structural protein NS5A. Interacts with host PLA2G4C; this interaction likely initiates the recruitment of replication complexes to lipid droplets. Interacts with host STING; this interaction disrupts the interaction between STING and TBK1 thereby suppressing the interferon signaling. Part of the replication complex composed of NS2, NS3, NS4A, NS4B, NS5A and the RNA-directed RNA polymerase embedded in an ER-derived membranous web. In terms of assembly, monomer. Homodimer; dimerization is required for RNA-binding. Interacts with the mature core protein. Interacts (via N-terminus) with non-structural protein 4A. Interacts with non-structural protein 4B. Interacts (via region D2) with RNA-directed RNA polymerase. Part of the viral assembly initiation complex composed of NS2, E1, E2, NS3, NS4A, NS5A and the mature core protein. Part of the replication complex composed of NS2, NS3, NS4A, NS4B, NS5A and the RNA-directed RNA polymerase embedded in an ER-derived membranous web. Interacts with host GRB2. Interacts with host BIN1. Interacts with host PIK3R1. Interacts with host SRCAP. Interacts with host FKBP8. Interacts (via C-terminus) with host VAPB (via MSP domain). Interacts with host EIF2AK2/PKR; this interaction leads to disruption of EIF2AK2 dimerization by NS5A and probably allows the virus to evade the innate immune response. Interacts (via N-terminus) with host PACSIN2 (via N-terminus); this interaction attenuates protein kinase C alpha-mediated phosphorylation of PACSIN2 by disrupting the interaction between PACSIN2 and PRKCA. Interacts (via N-terminus) with host SRC kinase (via SH2 domain). Interacts with most Src-family kinases. Interacts with host IFI27 and SKP2; promotes the ubiquitin-mediated proteasomal degradation of NS5A. Interacts with host GPS2. Interacts with host TNFRSF21; this interaction allows the modulation by the virus of JNK, p38 MAPK, STAT3, and Akt signaling pathways in a DR6-dependent manner. Interacts (via N-terminus) with host CIDEB (via N-terminus); this interaction seems to regulate the association of HCV particles with APOE. Interacts with host CHKA/Choline Kinase-alpha; CHKA bridges host PI4KA and NS5A and potentiates NS5A-stimulated PI4KA activity, which then facilitates the targeting of the ternary complex to the ER for viral replication. Interacts with host SPSB2 (via C-terminus); this interaction targets NS5A for ubiquitination and degradation. Interacts with host RAB18; this interaction may promote the association of NS5A and other replicase components with lipid droplets. Interacts (via region D2) with host PPIA/CYPA; the interaction stimulates RNA-binding ability of NS5A and is dependent on the peptidyl-prolyl cis-trans isomerase activity of PPIA/CYPA. Interacts with host TRIM14; this interaction induces the degradation of NS5A. Homooligomer. Interacts with non-structural protein 5A. Interacts with host VAPB. Interacts with host PRK2/PKN2. Interacts with host HNRNPA1 and SEPT6; these interactions facilitate viral replication. Part of the replication complex composed of NS2, NS3, NS4A, NS4B, NS5A and the RNA-directed RNA polymerase. It depends on Zn(2+) as a cofactor. Mg(2+) serves as cofactor. Post-translationally, specific enzymatic cleavages in vivo yield mature proteins. The structural proteins, core, E1, E2 and p7 are produced by proteolytic processing by host signal peptidases. The core protein precursor is synthesized as a 23 kDa, which is retained in the ER membrane through the hydrophobic signal peptide. Cleavage by the signal peptidase releases the 21 kDa mature core protein. The cleavage of the core protein precursor occurs between aminoacids 176 and 188 but the exact cleavage site is not known. Some degraded forms of the core protein appear as well during the course of infection. The other proteins (p7, NS2, NS3, NS4A, NS4B, NS5A and NS5B) are cleaved by the viral proteases. Autoprocessing between NS2 and NS3 is mediated by the NS2 cysteine protease catalytic domain and regulated by the NS3 N-terminal domain. Phosphorylated by host PKC and PKA. In terms of processing, ubiquitinated; mediated by UBE3A and leading to core protein subsequent proteasomal degradation. Post-translationally, highly N-glycosylated. Palmitoylation is required for NS2/3 autoprocessing and E2 recruitment to membranes. In terms of processing, palmitoylated. This modification may play a role in its polymerization or in protein-protein interactions. Post-translationally, phosphorylated on serines in a basal form termed p56. p58 is a hyperphosphorylated form of p56. p56 and p58 coexist in the cell in roughly equivalent amounts. Hyperphosphorylation is dependent on the presence of NS4A. Host CSNK1A1/CKI-alpha or RPS6KB1 kinases may be responsible for NS5A phosphorylation. Tyrosine phosphorylation is essential for the interaction with host SRC. In terms of processing, the N-terminus is phosphorylated by host PRK2/PKN2.

It localises to the host endoplasmic reticulum membrane. The protein localises to the host mitochondrion membrane. The protein resides in the virion. It is found in the host cytoplasm. Its subcellular location is the host nucleus. It localises to the host lipid droplet. The protein localises to the virion membrane. The protein resides in the host mitochondrion. It is found in the host cell membrane. Its subcellular location is the host perinuclear region. It carries out the reaction Hydrolysis of four peptide bonds in the viral precursor polyprotein, commonly with Asp or Glu in the P6 position, Cys or Thr in P1 and Ser or Ala in P1'.. It catalyses the reaction a ribonucleoside 5'-triphosphate + H2O = a ribonucleoside 5'-diphosphate + phosphate + H(+). The catalysed reaction is ATP + H2O = ADP + phosphate + H(+). The enzyme catalyses RNA(n) + a ribonucleoside 5'-triphosphate = RNA(n+1) + diphosphate. Inhibited by the antiviral drug hexamethylene amiloride. Inhibition by amantadine appears to be genotype-dependent. Also inhibited by long-alkyl-chain iminosugar derivatives. With respect to regulation, activity is up-regulated by PRK2/PKN2-mediated phosphorylation. In terms of biological role, packages viral RNA to form a viral nucleocapsid, and promotes virion budding. Participates in the viral particle production as a result of its interaction with the non-structural protein 5A. Binds RNA and may function as a RNA chaperone to induce the RNA structural rearrangements taking place during virus replication. Modulates viral translation initiation by interacting with viral IRES and 40S ribosomal subunit. Affects various cell signaling pathways, host immunity and lipid metabolism. Prevents the establishment of cellular antiviral state by blocking the interferon-alpha/beta (IFN-alpha/beta) and IFN-gamma signaling pathways and by blocking the formation of phosphorylated STAT1 and promoting ubiquitin-mediated proteasome-dependent degradation of STAT1. Activates STAT3 leading to cellular transformation. Regulates the activity of cellular genes, including c-myc and c-fos. May repress the promoter of p53, and sequester CREB3 and SP110 isoform 3/Sp110b in the cytoplasm. Represses cell cycle negative regulating factor CDKN1A, thereby interrupting an important check point of normal cell cycle regulation. Targets transcription factors involved in the regulation of inflammatory responses and in the immune response: suppresses TNF-induced NF-kappa-B activation, and activates AP-1. Binds to dendritic cells (DCs) via C1QR1, resulting in down-regulation of T-lymphocytes proliferation. Alters lipid metabolism by interacting with hepatocellular proteins involved in lipid accumulation and storage. Induces up-regulation of FAS promoter activity, and thereby contributes to the increased triglyceride accumulation in hepatocytes (steatosis). Functionally, forms a heterodimer with envelope glycoprotein E2, which mediates virus attachment to the host cell, virion internalization through clathrin-dependent endocytosis and fusion with host membrane. Fusion with the host cell is most likely mediated by both E1 and E2, through conformational rearrangements of the heterodimer required for fusion rather than a classical class II fusion mechanism. E1/E2 heterodimer binds host apolipoproteins such as APOB and ApoE thereby forming a lipo-viro-particle (LVP). APOE associated to the LVP allows the initial virus attachment to cell surface receptors such as the heparan sulfate proteoglycans (HSPGs), syndecan-1 (SDC1), syndecan-1 (SDC2), the low-density lipoprotein receptor (LDLR) and scavenger receptor class B type I (SCARB1). The cholesterol transfer activity of SCARB1 allows E2 exposure and binding of E2 to SCARB1 and the tetraspanin CD81. E1/E2 heterodimer binding on CD81 activates the epithelial growth factor receptor (EGFR) signaling pathway. Diffusion of the complex E1-E2-EGFR-SCARB1-CD81 to the cell lateral membrane allows further interaction with Claudin 1 (CLDN1) and occludin (OCLN) to finally trigger HCV entry. Forms a heterodimer with envelope glycoprotein E1, which mediates virus attachment to the host cell, virion internalization through clathrin-dependent endocytosis and fusion with host membrane. Fusion with the host cell is most likely mediated by both E1 and E2, through conformational rearrangements of the heterodimer required for fusion rather than a classical class II fusion mechanism. The interaction between envelope glycoprotein E2 and host apolipoprotein E/APOE allows the proper assembly, maturation and infectivity of the viral particles. This interaction is probably promoted via the up-regulation of cellular autophagy by the virus. E1/E2 heterodimer binds host apolipoproteins such as APOB and APOE thereby forming a lipo-viro-particle (LVP). APOE associated to the LVP allows the initial virus attachment to cell surface receptors such as the heparan sulfate proteoglycans (HSPGs), syndecan-1 (SDC1), syndecan-1 (SDC2), the low-density lipoprotein receptor (LDLR) and scavenger receptor class B type I (SCARB1). The cholesterol transfer activity of SCARB1 allows E2 exposure and binding of E2 to SCARB1 and the tetraspanin CD81. E1/E2 heterodimer binding on CD81 activates the epithelial growth factor receptor (EGFR) signaling pathway. Diffusion of the complex E1-E2-EGFR-SCARB1-CD81 to the cell lateral membrane allows further interaction with Claudin 1 (CLDN1) and occludin (OCLN) to finally trigger HCV entry. Inhibits host EIF2AK2/PKR activation, preventing the establishment of an antiviral state. Viral ligand for CD209/DC-SIGN and CLEC4M/DC-SIGNR, which are respectively found on dendritic cells (DCs), and on liver sinusoidal endothelial cells and macrophage-like cells of lymph node sinuses. These interactions allow the capture of circulating HCV particles by these cells and subsequent facilitated transmission to permissive cells such as hepatocytes and lymphocyte subpopulations. The interaction between E2 and host amino acid transporter complex formed by SLC3A2 and SLC7A5/LAT1 may facilitate viral entry into host cell. Its function is as follows. Ion channel protein that acts as a viroporin and plays an essential role in the assembly, envelopment and secretion of viral particles. Regulates the host cell secretory pathway, which induces the intracellular retention of viral glycoproteins and favors assembly of viral particles. Creates a pore in acidic organelles and releases Ca(2+) and H(+) in the cytoplasm of infected cells, leading to a productive viral infection. High levels of cytoplasmic Ca(2+) may trigger membrane trafficking and transport of viral ER-associated proteins to viroplasms, sites of viral genome replication. This ionic imbalance induces the assembly of the inflammasome complex, which triggers the maturation of pro-IL-1beta into IL-1beta through the action of caspase-1. Targets also host mitochondria and induces mitochondrial depolarization. In addition of its role as a viroporin, acts as a lipid raft adhesion factor. In terms of biological role, cysteine protease required for the proteolytic auto-cleavage between the non-structural proteins NS2 and NS3. The N-terminus of NS3 is required for the function of NS2 protease (active region NS2-3). Promotes the initiation of viral particle assembly by mediating the interaction between structural and non-structural proteins. Functionally, displays three enzymatic activities: serine protease with a chymotrypsin-like fold, NTPase and RNA helicase. NS3 serine protease, in association with NS4A, is responsible for the cleavages of NS3-NS4A, NS4A-NS4B, NS4B-NS5A and NS5A-NS5B. The NS3/NS4A complex prevents phosphorylation of host IRF3, thus preventing the establishment of dsRNA induced antiviral state. The NS3/NS4A complex induces host amino acid transporter component SLC3A2, thus contributing to HCV propagation. NS3 RNA helicase binds to RNA and unwinds both dsDNA and dsRNA in the 3' to 5' direction, and likely resolves RNA complicated stable secondary structures in the template strand. Binds a single ATP and catalyzes the unzipping of a single base pair of dsRNA. Inhibits host antiviral proteins TBK1 and IRF3 thereby preventing the establishment of an antiviral state. Cleaves host MAVS/CARDIF thereby preventing the establishment of an antiviral state. Cleaves host TICAM1/TRIF, thereby disrupting TLR3 signaling and preventing the establishment of an antiviral state. Induces a specific membrane alteration that serves as a scaffold for the virus replication complex. This membrane alteration gives rise to the so-called ER-derived membranous web that contains the replication complex. NS4B self-interaction contributes to its function in membranous web formation. Promotes host TRIF protein degradation in a CASP8-dependent manner thereby inhibiting host TLR3-mediated interferon signaling. Disrupts the interaction between STING and TBK1 contributing to the inhibition of interferon signaling. Its function is as follows. Phosphorylated protein that is indispensable for viral replication and assembly. Both hypo- and hyperphosphorylated states are required for the viral life cycle. The hyperphosphorylated form of NS5A is an inhibitor of viral replication. Involved in RNA-binding and especially in binding to the viral genome. Zinc is essential for RNA-binding. Participates in the viral particle production as a result of its interaction with the mature viral core protein. Its interaction with host VAPB may target the viral replication complex to vesicles. Down-regulates viral IRES translation initiation. Mediates interferon resistance, presumably by interacting with and inhibiting host EIF2AK2/PKR. Prevents BIN1-induced apoptosis. Acts as a transcriptional activator of some host genes important for viral replication when localized in the nucleus. Via the interaction with host PACSIN2, modulates lipid droplet formation in order to promote virion assembly. Modulates TNFRSF21/DR6 signaling pathway for viral propagation. In terms of biological role, RNA-dependent RNA polymerase that performs primer-template recognition and RNA synthesis during viral replication. Initiates RNA transcription/replication at a flavin adenine dinucleotide (FAD), resulting in a 5'- FAD cap on viral RNAs. In this way, recognition of viral 5' RNA by host pattern recognition receptors can be bypassed, thereby evading activation of antiviral pathways. The sequence is that of Genome polyprotein from Homo sapiens (Human).